The sequence spans 428 residues: Ribulose bisphosphate carboxylase (428 aa).

Residue K151 is the Proton acceptor of the active site. Residue K153 participates in substrate binding. Residues K177, D179, and E180 each coordinate Mg(2+). K177 is modified (N6-carboxylysine). The active-site Proton acceptor is H270. Residues R271, H303, 354 to 356 (SGG), and 376 to 379 (QFGG) contribute to the substrate site.

It belongs to the RuBisCO large chain family. Type III subfamily. In terms of assembly, homodimer. In contrast to form I RuBisCO, the form III RuBisCO is composed solely of large subunits. Mg(2+) serves as cofactor.

It catalyses the reaction 2 (2R)-3-phosphoglycerate + 2 H(+) = D-ribulose 1,5-bisphosphate + CO2 + H2O. The catalysed reaction is D-ribulose 1,5-bisphosphate + O2 = 2-phosphoglycolate + (2R)-3-phosphoglycerate + 2 H(+). With respect to regulation, reversibly inhibited by O(2). Its function is as follows. Catalyzes the addition of molecular CO(2) and H(2)O to ribulose 1,5-bisphosphate (RuBP), generating two molecules of 3-phosphoglycerate (3-PGA). Functions in an archaeal AMP degradation pathway, together with AMP phosphorylase and R15P isomerase. The polypeptide is Ribulose bisphosphate carboxylase (Methanosarcina acetivorans (strain ATCC 35395 / DSM 2834 / JCM 12185 / C2A)).